The following is a 347-amino-acid chain: NAD-dependent alcohol dehydrogenase (347 aa).

Lysine 11 carries the N6-methyllysine modification. 7 residues coordinate Zn(2+): cysteine 38, histidine 68, glutamate 98, cysteine 101, cysteine 104, cysteine 112, and cysteine 154. N6-methyllysine is present on lysine 213.

This sequence belongs to the zinc-containing alcohol dehydrogenase family. As to quaternary structure, homodimer and homotetramer. The cofactor is Zn(2+).

It catalyses the reaction a primary alcohol + NAD(+) = an aldehyde + NADH + H(+). The catalysed reaction is a secondary alcohol + NAD(+) = a ketone + NADH + H(+). The chain is NAD-dependent alcohol dehydrogenase (adh) from Sulfurisphaera tokodaii (strain DSM 16993 / JCM 10545 / NBRC 100140 / 7) (Sulfolobus tokodaii).